Consider the following 572-residue polypeptide: Urease subunit alpha (572 aa).

The region spanning 131–572 is the Urease domain; sequence GGIDAHIHFI…LPLAQRYFLF (442 aa). Residues His-136, His-138, and Lys-219 each coordinate Ni(2+). Residue Lys-219 is modified to N6-carboxylysine. Position 221 (His-221) interacts with substrate. Positions 248 and 274 each coordinate Ni(2+). The active-site Proton donor is His-322. Ni(2+) is bound at residue Asp-362.

Belongs to the metallo-dependent hydrolases superfamily. Urease alpha subunit family. As to quaternary structure, heterotrimer of UreA (gamma), UreB (beta) and UreC (alpha) subunits. Three heterotrimers associate to form the active enzyme. Ni cation serves as cofactor. Carboxylation allows a single lysine to coordinate two nickel ions.

It is found in the cytoplasm. It carries out the reaction urea + 2 H2O + H(+) = hydrogencarbonate + 2 NH4(+). It functions in the pathway nitrogen metabolism; urea degradation; CO(2) and NH(3) from urea (urease route): step 1/1. The protein is Urease subunit alpha of Thermosynechococcus vestitus (strain NIES-2133 / IAM M-273 / BP-1).